A 243-amino-acid chain; its full sequence is ATP-dependent dethiobiotin synthetase BioD (243 aa).

12–17 provides a ligand contact to ATP; it reads DVGKTL. A Mg(2+)-binding site is contributed by Thr-16. Residue Lys-37 is part of the active site. Ser-41 is a substrate binding site. Residues Asp-54, 115 to 118, and 179 to 180 contribute to the ATP site; these read EGCG and NM. Residues Asp-54 and Glu-115 each coordinate Mg(2+).

The protein belongs to the dethiobiotin synthetase family. As to quaternary structure, homodimer. Mg(2+) is required as a cofactor.

Its subcellular location is the cytoplasm. The enzyme catalyses (7R,8S)-7,8-diammoniononanoate + CO2 + ATP = (4R,5S)-dethiobiotin + ADP + phosphate + 3 H(+). Its pathway is cofactor biosynthesis; biotin biosynthesis; biotin from 7,8-diaminononanoate: step 1/2. Catalyzes a mechanistically unusual reaction, the ATP-dependent insertion of CO2 between the N7 and N8 nitrogen atoms of 7,8-diaminopelargonic acid (DAPA, also called 7,8-diammoniononanoate) to form a ureido ring. The polypeptide is ATP-dependent dethiobiotin synthetase BioD (Caldicellulosiruptor saccharolyticus (strain ATCC 43494 / DSM 8903 / Tp8T 6331)).